The chain runs to 249 residues: 2,3-bisphosphoglycerate-dependent phosphoglycerate mutase (249 aa).

Substrate is bound by residues 8–15 (RHGESQWN), 21–22 (TG), arginine 60, 87–90 (ERHY), lysine 98, 114–115 (RR), and 183–184 (GN). Histidine 9 serves as the catalytic Tele-phosphohistidine intermediate. Glutamate 87 acts as the Proton donor/acceptor in catalysis.

This sequence belongs to the phosphoglycerate mutase family. BPG-dependent PGAM subfamily.

The catalysed reaction is (2R)-2-phosphoglycerate = (2R)-3-phosphoglycerate. The protein operates within carbohydrate degradation; glycolysis; pyruvate from D-glyceraldehyde 3-phosphate: step 3/5. In terms of biological role, catalyzes the interconversion of 2-phosphoglycerate and 3-phosphoglycerate. The protein is 2,3-bisphosphoglycerate-dependent phosphoglycerate mutase of Pelodictyon phaeoclathratiforme (strain DSM 5477 / BU-1).